Consider the following 245-residue polypeptide: Octanoyltransferase (245 aa).

Positions 54–242 (QNAPEQVWLL…AFEQIFGPTI (189 aa)) constitute a BPL/LPL catalytic domain. Residues 93-100 (RGGEFTYH), 173-175 (AIG), and 186-188 (GVS) contribute to the substrate site. Cys204 acts as the Acyl-thioester intermediate in catalysis.

Belongs to the LipB family.

Its subcellular location is the cytoplasm. It catalyses the reaction octanoyl-[ACP] + L-lysyl-[protein] = N(6)-octanoyl-L-lysyl-[protein] + holo-[ACP] + H(+). It functions in the pathway protein modification; protein lipoylation via endogenous pathway; protein N(6)-(lipoyl)lysine from octanoyl-[acyl-carrier-protein]: step 1/2. In terms of biological role, catalyzes the transfer of endogenously produced octanoic acid from octanoyl-acyl-carrier-protein onto the lipoyl domains of lipoate-dependent enzymes. Lipoyl-ACP can also act as a substrate although octanoyl-ACP is likely to be the physiological substrate. The chain is Octanoyltransferase from Bartonella quintana (strain Toulouse) (Rochalimaea quintana).